Here is a 425-residue protein sequence, read N- to C-terminus: Protein UL117 (425 aa).

The segment at 59–83 (PTTTSSSLAPPRDDERRPTPPLRPP) is disordered.

The protein belongs to the herpesviridae U84 family.

It localises to the host nucleus. Functionally, plays a role in the inhibition of host DNA replication in the infected cell. Targets the mini-chromosome maintenance (MCM) complex and blocks the accumulation of MCM proteins and their loading onto host chromatin. The protein is Protein UL117 (UL117) of Homo sapiens (Human).